The sequence spans 606 residues: DNA primase (606 aa).

The segment at 40 to 64 adopts a CHC2-type zinc-finger fold; the sequence is CPFHQEKTPSFYVVPEKRFYFCHGC. The Toprim domain maps to 256 to 349; sequence KAAVLVEGYF…DPDTFARREG (94 aa). Residues E262, D307, and D309 each contribute to the Mg(2+) site. Residues 429–451 are disordered; the sequence is VPLPKPAGGDAPPSSPNRPAPPL. Residues 441 to 451 show a composition bias toward pro residues; the sequence is PSSPNRPAPPL.

This sequence belongs to the DnaG primase family. In terms of assembly, monomer. Interacts with DnaB. Zn(2+) is required as a cofactor. Mg(2+) serves as cofactor.

It carries out the reaction ssDNA + n NTP = ssDNA/pppN(pN)n-1 hybrid + (n-1) diphosphate.. RNA polymerase that catalyzes the synthesis of short RNA molecules used as primers for DNA polymerase during DNA replication. This chain is DNA primase, found in Myxococcus xanthus.